Here is a 228-residue protein sequence, read N- to C-terminus: MRQDIVIRGTTRTGLLLLLPDEGEFSAVLERLAERLASSGRFFVGGRVQVHVGNRRLSPEDREALEQTLQRSGMVLLSVKEGGDPLAEVQAPEAGAPSAPPPPAGNTLVVTKTVRSGQEIRHDGDVIILGDVNPGAVVVATGHIVVMGALRGVAHAGCTGNRTAIVAATKLRPTQLRIAEVIGRAPDGDAPQSYPEVARIRGDLIVVEASAEKRQVSALEAVGAKEDR.

This sequence belongs to the MinC family. In terms of assembly, interacts with MinD and FtsZ.

Its function is as follows. Cell division inhibitor that blocks the formation of polar Z ring septums. Rapidly oscillates between the poles of the cell to destabilize FtsZ filaments that have formed before they mature into polar Z rings. Prevents FtsZ polymerization. The sequence is that of Probable septum site-determining protein MinC from Symbiobacterium thermophilum (strain DSM 24528 / JCM 14929 / IAM 14863 / T).